The chain runs to 300 residues: Protein CANDIDATE G-PROTEIN COUPLED RECEPTOR 2 (300 aa).

Transmembrane regions (helical) follow at residues 37–57 (GFLHNTVLVLASILFVAYLAY), 73–93 (IMIAYYGFLWLVSLLNLAWCC), 110–130 (LTLFTTSGMLFLEVSLVAFLF), 152–172 (IGLDLLLKAIYLFGFGVPLFI), 183–203 (WGLWVIHKLLLAGIYGMIFFM), 222–242 (ITVMLALNGLSLFACALTANG), and 245–265 (FGLWLYGITSVCYHAFYLPLL).

The protein belongs to the UPF0359 family. In terms of assembly, interacts with GPA1. Expressed at low levels in seedlings.

The protein localises to the cell membrane. In terms of biological role, plays a role in plants and microbes interactions. G-protein coupled melatonin receptor involved in root growth mediated by the bacterial quorum-sensing signals N-acyl-homoserine lactones (AHLs). Binds to melatonin. Phytomelatonin receptor required, in collaboration with GPA1, for melatonin-mediated stomatal closure involving H(2)O(2) and Ca(2+) signals. Essential for melatonin-mediated plant response to osmotic stress probably by activating reactive oxygen species (ROS) scavenging ability. This chain is Protein CANDIDATE G-PROTEIN COUPLED RECEPTOR 2, found in Arabidopsis thaliana (Mouse-ear cress).